Here is a 95-residue protein sequence, read N- to C-terminus: RING finger protein Z (95 aa).

Glycine 2 carries N-myristoyl glycine; by host lipidation. The segment at 38–74 adopts an RING-type; atypical zinc-finger fold; the sequence is CKRCWFATKGLIACSDHYLCLNCLTIMLSDGNFCEVC. A PTAP/PSAP motif motif is present at residues 88–91; it reads PSAP.

The protein belongs to the arenaviridae Z protein family. In terms of assembly, interacts with protein NP; this interaction probably directs the encapsidated genome to budding sites. Interacts (via RING domain) with polymerase L; this interaction inhibits viral transcription and replication, Z partially blocks the product exit tunnel for the releasing nascent RNA product. Interacts with the glycoprotein complex; this interaction plays a role in virion budding. Interacts with host eIF4E; this interaction results in eIF4E reduced affinity for its substrate, the 5'-m7 G cap structure. Interacts (via late-budding domain) with host TSG101; this interaction is essential for budding and release of viral particles. Interacts with host RPLP0; this interaction may serve to load ribosome-like particles inside the virion. Interacts with host PML; this interaction induces PML bodies redistribution in the cytoplasm upon viral infection. In terms of processing, myristoylation is required for the role of RING finger protein Z in assembly and budding.

The protein localises to the virion. It localises to the host cytoplasm. Its subcellular location is the host perinuclear region. It is found in the host cell membrane. Its function is as follows. Plays a crucial role in virion assembly and budding. Expressed late in the virus life cycle, it acts as an inhibitor of viral transcription and RNA synthesis by interacting with the viral polymerase L. Presumably recruits the NP encapsidated genome to cellular membranes at budding sites via direct interaction with NP. Plays critical roles in the final steps of viral release by interacting with host TSG101, a member of the vacuolar protein-sorting pathway and using other cellular host proteins involved in vesicle formation pathway. The budding of the virus progeny occurs after association of protein Z with the viral glycoprotein complex SSP-GP1-GP2 at the cell periphery, step that requires myristoylation of protein Z. Also selectively represses protein production by associating with host eIF4E. In cell-based minigenome assay, has an inhibitory effect on the ribonucleoprotein machinery (vRNP), which is responsible for the replication and transcription of the viral genome. The sequence is that of RING finger protein Z from Sooretamys angouya (Paraguayan rice rat).